The sequence spans 213 residues: MKALKIALTKGRLEKDAVALLEKAGIDCSSMNDKKRKLIFHSSTQPISFILVKAVDVMTYVKHGVADIGIVGKDVLMEASKSHYEMLDLEIGQCQFCLASTPDFDPSSYRRKIIATKYPAVSSKFFRAKGEDVEIIKIEGSVEIAPVLGLADAIIDIVETGSTLKENGLVIYEKMYPISARLIVNKASLKQNKTQIFQLIDQLEQAIKEEQTR.

The protein belongs to the ATP phosphoribosyltransferase family. Short subfamily. Heteromultimer composed of HisG and HisZ subunits.

Its subcellular location is the cytoplasm. The catalysed reaction is 1-(5-phospho-beta-D-ribosyl)-ATP + diphosphate = 5-phospho-alpha-D-ribose 1-diphosphate + ATP. It functions in the pathway amino-acid biosynthesis; L-histidine biosynthesis; L-histidine from 5-phospho-alpha-D-ribose 1-diphosphate: step 1/9. In terms of biological role, catalyzes the condensation of ATP and 5-phosphoribose 1-diphosphate to form N'-(5'-phosphoribosyl)-ATP (PR-ATP). Has a crucial role in the pathway because the rate of histidine biosynthesis seems to be controlled primarily by regulation of HisG enzymatic activity. This is ATP phosphoribosyltransferase (hisG) from Listeria innocua serovar 6a (strain ATCC BAA-680 / CLIP 11262).